We begin with the raw amino-acid sequence, 429 residues long: Serine hydroxymethyltransferase 1 (429 aa).

(6S)-5,6,7,8-tetrahydrofolate-binding positions include Leu-125 and 129 to 131; that span reads GHL. Lys-234 carries the post-translational modification N6-(pyridoxal phosphate)lysine.

It belongs to the SHMT family. As to quaternary structure, homodimer. It depends on pyridoxal 5'-phosphate as a cofactor.

Its subcellular location is the cytoplasm. It catalyses the reaction (6R)-5,10-methylene-5,6,7,8-tetrahydrofolate + glycine + H2O = (6S)-5,6,7,8-tetrahydrofolate + L-serine. It participates in one-carbon metabolism; tetrahydrofolate interconversion. It functions in the pathway amino-acid biosynthesis; glycine biosynthesis; glycine from L-serine: step 1/1. In terms of biological role, catalyzes the reversible interconversion of serine and glycine with tetrahydrofolate (THF) serving as the one-carbon carrier. This reaction serves as the major source of one-carbon groups required for the biosynthesis of purines, thymidylate, methionine, and other important biomolecules. Also exhibits THF-independent aldolase activity toward beta-hydroxyamino acids, producing glycine and aldehydes, via a retro-aldol mechanism. This is Serine hydroxymethyltransferase 1 from Agrobacterium fabrum (strain C58 / ATCC 33970) (Agrobacterium tumefaciens (strain C58)).